A 449-amino-acid chain; its full sequence is F-box/LRR-repeat protein At3g60040 (449 aa).

The F-box domain maps to 12 to 64; that stretch reads RDAISWLPDEVLGKILSLIPTKQAVSTSLLAKKWRTIFRLVDHLELDDSFSLQ. LRR repeat units lie at residues 161–188, 191–215, 216–237, 239–263, 287–312, and 340–365; these read LTLG…FIDT, FYDI…SVHH, HDFI…SVDY, CPDD…EYSH, ERKV…HLSP, and KNKR…IVKD.

The polypeptide is F-box/LRR-repeat protein At3g60040 (Arabidopsis thaliana (Mouse-ear cress)).